Consider the following 710-residue polypeptide: Dendrin (710 aa).

Disordered regions lie at residues 1–22 (MLDGPLFSEGPDSPRELQDEES), 62–195 (WARG…PWGG), 213–274 (AGTA…KRLD), and 324–375 (GLNS…GKEG). Positions 103 to 134 (AEVRAREQEKRKAASQEREAKETERKRRKAGG) form a coiled coil. A compositionally biased stretch (basic and acidic residues) spans 105 to 127 (VRAREQEKRKAASQEREAKETER). The interval 113-131 (RKAASQEREAKETERKRRK) is nuclear localization. The interval 186–236 (GVAWAGPWGGRRPGPPSYEAHLLLRGSAGTAPRRRWDRPPPYVAPPSYEGP) is interaction with MAGI2. Residues 265–274 (EGGRTKKRLD) are compositionally biased toward basic and acidic residues. An interaction with ACTN1 region spans residues 341-435 (PGTDAALSRS…LEVWKVTRRA (95 aa)). A compositionally biased stretch (basic residues) spans 360 to 370 (PRSRQHLRGSR). Ser388 carries the phosphoserine modification. Disordered stretches follow at residues 390–422 (KKPPVRHSQTLPRPWAPGGTGWKESLGQREGAE), 469–508 (PRTQQGQLVPSGESCSVSDSLSQPKPCHEEEGEGAAANPS), and 521–710 (NQPS…RERE). The tract at residues 407-708 (GGTGWKESLG…TRKTPQGNRE (302 aa)) is interaction with CD2AP and NPHS1. Over residues 469–491 (PRTQQGQLVPSGESCSVSDSLSQ) the composition is skewed to polar residues. Basic and acidic residues predominate over residues 693–710 (GFIREDTRKTPQGNRERE).

Forms a ternary complex with MAGI2 and SH3KBP1; recruits DDN to the cytoplasm. Interacts with MAGI1. Interacts with ACTN1 and may interact with WWC1. Interacts with the podocyte slit diaphragm proteins CD2AP, NPHS1 and NPHS2; the interaction with CD2AP and NPHS1 is direct. Two forms of 81 kDa and 89 kDa are expressed in brain. The 81 kDa form is the only one found in kidney podocytes.

It localises to the cell projection. Its subcellular location is the dendritic spine membrane. It is found in the cytoplasm. The protein localises to the endoplasmic reticulum membrane. The protein resides in the perikaryon. It localises to the nucleus. In terms of biological role, promotes apoptosis of kidney glomerular podocytes. Podocytes are highly specialized cells essential to the ultrafiltration of blood, resulting in the extraction of urine and the retention of protein. This chain is Dendrin (Ddn), found in Mus musculus (Mouse).